The sequence spans 451 residues: Tubulin alpha-2 chain (451 aa).

Position 11 (Gln-11) interacts with GTP. Lys-40 carries the post-translational modification N6-acetyllysine. Glu-71, Gly-144, Thr-145, Thr-179, Asn-206, and Asn-228 together coordinate GTP. Mg(2+) is bound at residue Glu-71. Glu-254 is a catalytic residue.

Belongs to the tubulin family. Dimer of alpha and beta chains. A typical microtubule is a hollow water-filled tube with an outer diameter of 25 nm and an inner diameter of 15 nM. Alpha-beta heterodimers associate head-to-tail to form protofilaments running lengthwise along the microtubule wall with the beta-tubulin subunit facing the microtubule plus end conferring a structural polarity. Microtubules usually have 13 protofilaments but different protofilament numbers can be found in some organisms and specialized cells. The cofactor is Mg(2+). Undergoes a tyrosination/detyrosination cycle, the cyclic removal and re-addition of a C-terminal tyrosine residue by the enzymes tubulin tyrosine carboxypeptidase (TTCP) and tubulin tyrosine ligase (TTL), respectively. In terms of processing, acetylation of alpha chains at Lys-40 stabilizes microtubules and affects affinity and processivity of microtubule motors. This modification has a role in multiple cellular functions, ranging from cell motility, cell cycle progression or cell differentiation to intracellular trafficking and signaling.

The protein resides in the cytoplasm. It is found in the cytoskeleton. It carries out the reaction GTP + H2O = GDP + phosphate + H(+). In terms of biological role, tubulin is the major constituent of microtubules, a cylinder consisting of laterally associated linear protofilaments composed of alpha- and beta-tubulin heterodimers. Microtubules grow by the addition of GTP-tubulin dimers to the microtubule end, where a stabilizing cap forms. Below the cap, tubulin dimers are in GDP-bound state, owing to GTPase activity of alpha-tubulin. In Oryza sativa subsp. japonica (Rice), this protein is Tubulin alpha-2 chain (TUBA).